The following is a 287-amino-acid chain: tRNA N(3)-cytidine methyltransferase METTL6 (287 aa).

Positions 45, 49, 87, 110, 136, 137, and 157 each coordinate S-adenosyl-L-methionine. Positions 267-287 (RKPPKDPAPTTDSASLLRKEF) are disordered.

This sequence belongs to the methyltransferase superfamily. METL family. As to quaternary structure, monomer. Interacts with SARS1/SerRS; interaction is mediated via tRNA(Ser) and is required for N(3)-methylcytidine methylation.

The protein localises to the cytoplasm. Its subcellular location is the nucleus. It carries out the reaction cytidine(32) in tRNA(Ser) + S-adenosyl-L-methionine = N(3)-methylcytidine(32) in tRNA(Ser) + S-adenosyl-L-homocysteine + H(+). Its function is as follows. S-adenosyl-L-methionine-dependent methyltransferase that mediates N(3)-methylcytidine modification of residue 32 of the tRNA anticodon loop of tRNA(Ser), including tRNA(Ser)(UGA) and tRNA(Ser)(GCU). Interaction with SARS1/SerRS is required for N(3)-methylcytidine methylation. The sequence is that of tRNA N(3)-cytidine methyltransferase METTL6 (Mettl6) from Rattus norvegicus (Rat).